The following is a 274-amino-acid chain: MVEAPRIRITYEKIRHTKNHRIVSISGPSYKRMNVDLIDYIIRKWWFAGKYIYLMLISSNKPTYVIRTHMMMHGRILVGNQDSPTKRAFMIIQLDNDIVLRWYRSQITLLDPNCLAEIKTNYTICTTRQAIMDSIKLMKYDLSNNRFDYNLFQSHLKNGINIHSSEIITDFLLDQEYFPGVGNILQQEALYDCKILPLKKVQDIDEPMFDCLCNSLKKIIDLLYESYKFRESGKEFGPILRIYRKSLCPLGHKTIRKKIGLRNRMTTWCPVCQL.

Residues 241–274 (RIYRKSLCPLGHKTIRKKIGLRNRMTTWCPVCQL) form an FPG-type; degenerate zinc finger.

The protein belongs to the FPG family.

The sequence is that of Endonuclease 8-like L720 from Acanthamoeba polyphaga mimivirus (APMV).